The chain runs to 593 residues: Acetyl-coenzyme A transferase nodX (593 aa).

The tract at residues 572–593 (DEDEQGSGFRSGSGLGSGSIAD) is disordered. The span at 580 to 593 (FRSGSGLGSGSIAD) shows a compositional bias: gly residues.

The protein belongs to the CoA-transferase III family.

It participates in secondary metabolite biosynthesis. Functionally, acetyl-coenzyme A transferase; part of the gene cluster that mediates the biosynthesis of the indole diterpenes nodulisporic acids (NA). Nodulisporic acid A (NAA) and its chemically modified derivatives are of particular significance because of their highly potent insecticidal activity against blood-feeding arthropods and lack of observable adverse effects on mammals, in particular the tremogenicity associated with the paspaline-derived IDTs is not observed. The geranylgeranyl diphosphate (GGPP) synthase ggs1, localized outside of the cluster, is proposed to catalyze the first step in nodulisporic acid biosynthesis via conversion of farnesyl pyrophosphate and isopentyl pyrophosphate into geranylgeranyl pyrophosphate (GGPP). Condensation of indole-3-glycerol phosphate with GGPP by the prenyl transferase nodC then forms 3-geranylgeranylindole (3-GGI). Epoxidation by the FAD-dependent monooxygenase nodM leads to a single-epoxidized-GGI that is substrate of the terpene cyclase nodB for cyclization to yield emindole SB. The terminal methyl carbon, C28, of emindole SB is then oxidized by the cytochrome P450 monooxygenase nodW to produce nodulisporic acid F (NAF), the pentacyclic core of NAA. NAF is converted to nodulisporic acid E (NAE) via prenylation. This step is probably performed by one of the indole diterpene prenyltransferases nodD1 or nodD2. Several oxidation steps performed by the FAD-linked oxidoreductase nodO and one of the cytochrome P450 monooxygenase nodR, nodX or nodZ further convert NAE to nodulisporic acid D (NAD). NAD is substrate of cytochrome P450 monooxygenase nodJ to produce the precursor of nodulisporic acid C (NAC), converted to NAC by one of the indole diterpene prenyltransferases nodD1 or nodD2. The FAD-dependent monooxygenase nodY2 then oxidizes NAC to nodulisporic acid B (NAB). Finally NAB is converted to NAA by one of the cytochrome P450 monooxygenases nodR, nodX or nodZ. The chain is Acetyl-coenzyme A transferase nodX from Hypoxylon pulicicidum.